The sequence spans 304 residues: Probable WRKY transcription factor 13 (304 aa).

Positions 141 to 190 (QKNNHGSEIDVDDNDDEVGDGGGINDDDNGRHHHHDTPSRHDKHNTASLG) are disordered. Over residues 149 to 159 (IDVDDNDDEVG) the composition is skewed to acidic residues. Positions 217-282 (SEVDVLDDGY…YEGRHLHSPS (66 aa)) form a DNA-binding region, WRKY.

The protein belongs to the WRKY group II-c family.

The protein resides in the nucleus. Its function is as follows. Transcription factor. Interacts specifically with the W box (5'-(T)TGAC[CT]-3'), a frequently occurring elicitor-responsive cis-acting element. This Arabidopsis thaliana (Mouse-ear cress) protein is Probable WRKY transcription factor 13 (WRKY13).